The sequence spans 1043 residues: Isoleucine--tRNA ligase (1043 aa).

The 'HIGH' region signature appears at 49–59; it reads PFATGLPHYGH. A 'KMSKS' region motif is present at residues 592 to 596; that stretch reads KMSKR. K595 serves as a coordination point for ATP.

Belongs to the class-I aminoacyl-tRNA synthetase family. IleS type 2 subfamily. In terms of assembly, monomer. Zn(2+) serves as cofactor.

Its subcellular location is the cytoplasm. The enzyme catalyses tRNA(Ile) + L-isoleucine + ATP = L-isoleucyl-tRNA(Ile) + AMP + diphosphate. In terms of biological role, catalyzes the attachment of isoleucine to tRNA(Ile). As IleRS can inadvertently accommodate and process structurally similar amino acids such as valine, to avoid such errors it has two additional distinct tRNA(Ile)-dependent editing activities. One activity is designated as 'pretransfer' editing and involves the hydrolysis of activated Val-AMP. The other activity is designated 'posttransfer' editing and involves deacylation of mischarged Val-tRNA(Ile). This is Isoleucine--tRNA ligase from Chlamydia abortus (strain DSM 27085 / S26/3) (Chlamydophila abortus).